The following is a 147-amino-acid chain: Protein phosphatase 1 regulatory subunit 14A (147 aa).

Positions 1-11 are enriched in basic residues; sequence MAAQRLGKRVL. The segment at 1–37 is disordered; the sequence is MAAQRLGKRVLSKLQSPSRARGPGGSPGGLQKRHARV. Phosphoserine is present on Ser-26. The segment at 35-120 is inhibitory; sequence ARVTVKYDRR…LLVKLRGLHK (86 aa). Thr-38 is subject to Phosphothreonine. A disordered region spans residues 118–147; the sequence is LHKQPGLRQPSPSGDGSLSPRQDRARTAPP. Over residues 127 to 137 the composition is skewed to polar residues; the sequence is PSPSGDGSLSP. 3 positions are modified to phosphoserine: Ser-128, Ser-134, and Ser-136. Positions 138–147 are enriched in basic and acidic residues; the sequence is RQDRARTAPP.

The protein belongs to the PP1 inhibitor family. In terms of processing, phosphorylation of Thr-38 induces a conformation change. In terms of tissue distribution, detected in aorta smooth muscle and bladder.

Its subcellular location is the cytoplasm. In terms of biological role, inhibitor of PPP1CA. Has over 1000-fold higher inhibitory activity when phosphorylated, creating a molecular switch for regulating the phosphorylation status of PPP1CA substrates and smooth muscle contraction. The chain is Protein phosphatase 1 regulatory subunit 14A (CPI17) from Sus scrofa (Pig).